Here is a 366-residue protein sequence, read N- to C-terminus: Peptide chain release factor 2 (366 aa).

An N5-methylglutamine modification is found at glutamine 251.

This sequence belongs to the prokaryotic/mitochondrial release factor family. Post-translationally, methylated by PrmC. Methylation increases the termination efficiency of RF2.

The protein resides in the cytoplasm. Peptide chain release factor 2 directs the termination of translation in response to the peptide chain termination codons UGA and UAA. This is Peptide chain release factor 2 (prfB) from Listeria monocytogenes serovar 1/2a (strain ATCC BAA-679 / EGD-e).